Here is a 225-residue protein sequence, read N- to C-terminus: Phosphoglycolate phosphatase (225 aa).

The Nucleophile role is filled by Asp-11. 2 residues coordinate Mg(2+): Asp-11 and Asp-13. Lys-153 contributes to the substrate binding site. 2 residues coordinate Mg(2+): Asp-176 and Asp-180.

The protein belongs to the archaeal SPP-like hydrolase family. Requires Mg(2+) as cofactor.

It catalyses the reaction 2-phosphoglycolate + H2O = glycolate + phosphate. Catalyzes the dephosphorylation of 2-phosphoglycolate. The protein is Phosphoglycolate phosphatase of Halobacterium salinarum (strain ATCC 29341 / DSM 671 / R1).